The sequence spans 178 residues: uncharacterized protein (178 aa).

This is an uncharacterized protein from Sulfolobus islandicus filamentous virus (isolate Iceland/Hveragerdi) (SIFV).